A 128-amino-acid polypeptide reads, in one-letter code: Methylglyoxal synthase (128 aa).

An MGS-like domain is found at 1–128; sequence MRIALIAHDR…MQDHPGNRQA (128 aa). Residues His8, Lys12, 34-37, and 54-55 each bind substrate; these read TGTT and SG. Asp60 acts as the Proton donor/acceptor in catalysis. A substrate-binding site is contributed by His87.

The protein belongs to the methylglyoxal synthase family.

The catalysed reaction is dihydroxyacetone phosphate = methylglyoxal + phosphate. Functionally, catalyzes the formation of methylglyoxal from dihydroxyacetone phosphate. The chain is Methylglyoxal synthase from Moorella thermoacetica (strain ATCC 39073 / JCM 9320).